Consider the following 414-residue polypeptide: DNA primase small subunit PriS (414 aa).

Catalysis depends on residues D98, D100, and D312.

It belongs to the eukaryotic-type primase small subunit family. Heterodimer of a small subunit (PriS) and a large subunit (PriL). Mg(2+) is required as a cofactor. The cofactor is Mn(2+).

Functionally, catalytic subunit of DNA primase, an RNA polymerase that catalyzes the synthesis of short RNA molecules used as primers for DNA polymerase during DNA replication. The small subunit contains the primase catalytic core and has DNA synthesis activity on its own. Binding to the large subunit stabilizes and modulates the activity, increasing the rate of DNA synthesis while decreasing the length of the DNA fragments, and conferring RNA synthesis capability. The DNA polymerase activity may enable DNA primase to also catalyze primer extension after primer synthesis. May also play a role in DNA repair. The polypeptide is DNA primase small subunit PriS (Methanosarcina barkeri (strain Fusaro / DSM 804)).